The sequence spans 449 residues: Xylose isomerase (449 aa).

Active-site residues include His103 and Asp106. Mg(2+) is bound by residues Glu234, Glu270, His273, Asp298, Asp309, Asp311, and Asp342.

It belongs to the xylose isomerase family. Homotetramer. Mg(2+) serves as cofactor.

The protein resides in the cytoplasm. It catalyses the reaction alpha-D-xylose = alpha-D-xylulofuranose. In Levilactobacillus brevis (Lactobacillus brevis), this protein is Xylose isomerase.